The following is a 798-amino-acid chain: Galactinol--sucrose galactosyltransferase (798 aa).

The protein belongs to the glycosyl hydrolases 36 family.

The catalysed reaction is alpha-D-galactosyl-(1-&gt;3)-1D-myo-inositol + sucrose = raffinose + myo-inositol. Its activity is regulated as follows. Inhibited by 1-deoxygalactonojirimycin. Not inhibited by stachyose. Strong inhibition of the hydrolytic activity by sucrose. Transglycosidase operating by a ping-pong reaction mechanism. Involved in the synthesis of raffinose, a major soluble carbohydrate in seeds, roots and tubers. Able to utilize D-ononitol and D-pinitol as acceptors. May also act as a glycoside hydrolase. The polypeptide is Galactinol--sucrose galactosyltransferase (RFS) (Pisum sativum (Garden pea)).